The following is a 155-amino-acid chain: Small ribosomal subunit protein uS7 (155 aa).

The protein belongs to the universal ribosomal protein uS7 family. Part of the 30S ribosomal subunit. Contacts proteins S9 and S11.

In terms of biological role, one of the primary rRNA binding proteins, it binds directly to 16S rRNA where it nucleates assembly of the head domain of the 30S subunit. Is located at the subunit interface close to the decoding center, probably blocks exit of the E-site tRNA. The chain is Small ribosomal subunit protein uS7 from Sulfurovum sp. (strain NBC37-1).